We begin with the raw amino-acid sequence, 254 residues long: Pimeloyl-[acyl-carrier protein] methyl ester esterase (254 aa).

Substrate is bound by residues Trp20, 80–81, and 141–145; these read SL and FLALQ. Ser80 functions as the Nucleophile in the catalytic mechanism. Catalysis depends on residues Asp205 and His233. His233 is a binding site for substrate.

This sequence belongs to the AB hydrolase superfamily. Carboxylesterase BioH family. In terms of assembly, monomer.

Its subcellular location is the cytoplasm. It carries out the reaction 6-carboxyhexanoyl-[ACP] methyl ester + H2O = 6-carboxyhexanoyl-[ACP] + methanol + H(+). It functions in the pathway cofactor biosynthesis; biotin biosynthesis. Functionally, the physiological role of BioH is to remove the methyl group introduced by BioC when the pimeloyl moiety is complete. It allows to synthesize pimeloyl-ACP via the fatty acid synthetic pathway through the hydrolysis of the ester bonds of pimeloyl-ACP esters. This chain is Pimeloyl-[acyl-carrier protein] methyl ester esterase, found in Methylococcus capsulatus (strain ATCC 33009 / NCIMB 11132 / Bath).